The sequence spans 201 residues: Ras-related protein Rab-1B (201 aa).

M1 carries the post-translational modification N-acetylmethionine. GTP-binding residues include S17, G18, V19, G20, K21, S22, C23, Y33, T34, E35, S36, S39, and T40. A Mg(2+)-binding site is contributed by S22. Positions 30 to 45 match the Switch 1 motif; it reads DDTYTESYISTIGVDF. The Mg(2+) site is built by T40 and D63. Residues 64-83 form a switch 2 region; required for interaction with REP1/CHM region; sequence TAGQERFRTITSSYYRGAHG. The Switch 2 motif lies at 65–80; it reads AGQERFRTITSSYYRG. G66 lines the GTP pocket. (Microbial infection) O-(2-cholinephosphoryl)serine is present on S76. The residue at position 77 (Y77) is a (Microbial infection) O-AMP-tyrosine. Residues N121, K122, D124, S151, A152, and K153 each coordinate GTP. A disordered region spans residues 174-201; it reads GPGAASGGERPNLKIDSTPVKPAGGGCC. Residues C200 and C201 are each lipidated (S-geranylgeranyl cysteine). The residue at position 201 (C201) is a Cysteine methyl ester.

This sequence belongs to the small GTPase superfamily. Rab family. In terms of assembly, interacts with MICAL1 and MICAL2. Interacts (in GTP-bound form) with MICALCL, MICAL1 and MILCAL3. Interacts with GDI1; the interaction requires the GDP-bound state. Interacts with CHM/REP1; the interaction requires the GDP-bound form and is necessary for prenylation by GGTase II. Interacts with RabGAP TBC1D20. Interacts (in GDP-bound form) with lipid phosphatase MTMR6 (via GRAM domain); the interaction regulates MTMR6 recruitment to the endoplasmic reticulum-Golgi intermediate compartment. Interacts (in GDP-bound form) with lipid phosphatase MTMR7. As to quaternary structure, (Microbial infection) Interacts with L.pneumophila AnkX. Interacts with L.pneumophila Lem3. Interacts with L.pneumophila SidD. Interacts with L.pneumophila DrrA. Mg(2+) serves as cofactor. Post-translationally, prenylated; by GGTase II, only after interaction of the substrate with Rab escort protein 1 (REP1). In terms of processing, (Microbial infection) AMPylation at Tyr-77 by L.pneumophila DrrA occurs in the switch 2 region and leads to moderate inactivation of the GTPase activity. It appears to prolong the lifetime of the GTP state of RAB1B by restricting access of GTPase effectors to switch 2 and blocking effector-stimulated GTP hydrolysis, thereby rendering RAB1B constitutively active. It is later de-AMPylated by L.pneumophila SidD, releasing RAB1B from bacterial phagosomes. (Microbial infection) Phosphocholinated at Ser-76 by L.pneumophila AnkX, leading to displace GDP dissociation inhibitors (GDI). Both GDP-bound and GTP-bound forms can be phosphocholinated. Dephosphocholinated by L.pneumophila Lem3, restoring accessibility to L.pneumophila GTPase effector LepB. Post-translationally, (Microbial infection) Glycosylated by S.typhimurium protein Ssek3: arginine GlcNAcylation prevents GTPase activity, thereby disrupting vesicular protein transport from the endoplasmic reticulum (ER) to the Golgi compartment.

It localises to the cytoplasm. The protein localises to the membrane. The protein resides in the preautophagosomal structure membrane. It is found in the perinuclear region. It catalyses the reaction GTP + H2O = GDP + phosphate + H(+). Regulated by guanine nucleotide exchange factors (GEFs) which promote the exchange of bound GDP for free GTP. Regulated by GTPase activating proteins (GAPs) including TBC1D20 which increases the GTP hydrolysis activity. Inhibited by GDP dissociation inhibitors (GDIs). In terms of biological role, the small GTPases Rab are key regulators of intracellular membrane trafficking, from the formation of transport vesicles to their fusion with membranes. Rabs cycle between an inactive GDP-bound form and an active GTP-bound form that is able to recruit to membranes different set of downstream effectors directly responsible for vesicle formation, movement, tethering and fusion. Plays a role in the initial events of the autophagic vacuole development which take place at specialized regions of the endoplasmic reticulum. Regulates vesicular transport between the endoplasmic reticulum and successive Golgi compartments. Required to modulate the compacted morphology of the Golgi. Promotes the recruitment of lipid phosphatase MTMR6 to the endoplasmic reticulum-Golgi intermediate compartment. This is Ras-related protein Rab-1B from Homo sapiens (Human).